We begin with the raw amino-acid sequence, 910 residues long: Potassium/sodium hyperpolarization-activated cyclic nucleotide-gated channel 1 (910 aa).

A disordered region spans residues 1–75 (MEGGGKPNSA…PAGSFEDAEG (75 aa)). At 1–131 (MEGGGKPNSA…WIIHPYSDFR (131 aa)) the chain is on the cytoplasmic side. A helical membrane pass occupies residues 132 to 153 (FYWDLIMLIMMVGNLVIIPVGI). The Extracellular portion of the chain corresponds to 154 to 162 (TFFTEQTTT). The helical transmembrane segment at 163–183 (PWIIFNVASDTVFLLDLIMNF) threads the bilayer. Residues 184–204 (RTGTVNEDSSEIILDPKVIKM) lie on the Cytoplasmic side of the membrane. The chain crosses the membrane as a helical span at residues 205-225 (NYLKSWFVVDFISSIPVDYIF). At 226-249 (LIVEKGMDSEVYKTARALRIVRFT) the chain is on the extracellular side. The chain crosses the membrane as a helical; Voltage-sensor span at residues 250 to 270 (KILSLLRLLRLSRLIRYIHQW). The Cytoplasmic portion of the chain corresponds to 271–284 (EEIFHMTYDLASAV). The chain crosses the membrane as a helical span at residues 285 to 307 (VRIFNLIGMMLLLCHWDGCLQFL). Residues 308–333 (VPLLQDFPPDCWVSLNEMVNDSWGKQ) lie on the Extracellular side of the membrane. N-linked (GlcNAc...) asparagine glycosylation occurs at Asn327. An intramembrane region (pore-forming) is located at residues 334–355 (YSYALFKAMSHMLCIGYGAQAP). The Selectivity filter motif lies at 347–351 (CIGYG). Topologically, residues 356-360 (VSMSD) are extracellular. A helical transmembrane segment spans residues 361-381 (LWITMLSMIVGATCYAMFVGH). Topologically, residues 382–910 (ATALIQSLDS…AEKPRFASNL (529 aa)) are cytoplasmic. Residues Gly528, Glu529, Cys531, Arg538, Thr539, Arg579, and Arg582 each coordinate 3',5'-cyclic AMP. Disordered regions lie at residues 634–681 (TALN…QPSA), 771–791 (QQQQ…VHKS), and 865–910 (QMSS…ASNL). Residues 639 to 680 (TSSTTTPTSRMRTQSPPVYTATSLSHSNLHSPSPSTQTPQPS) are compositionally biased toward low complexity. Residues 780–791 (GSSTPKNEVHKS) show a composition bias toward polar residues. A compositionally biased stretch (pro residues) spans 875 to 885 (RGVPPAPPPPA). A compositionally biased stretch (basic and acidic residues) spans 900–910 (DAEKPRFASNL).

Belongs to the potassium channel HCN family. In terms of assembly, homotetramer. Heterotetramer with HCN2. The potassium channel is composed of a homo- or heterotetrameric complex of pore-forming subunits. Interacts with KCNE2. Interacts with the SH3 domain of CSK. Post-translationally, N-glycosylated. In terms of tissue distribution, predominantly expressed in brain. Highly expressed in apical dendrites of pyramidal neurons in the cortex, in the layer corresponding to the stratum lacunosum-moleculare in the hippocampus and in axons of basket cells in the cerebellum (at protein level). Expressed in a subset of elongated cells in taste buds.

The protein resides in the cell membrane. The catalysed reaction is Na(+)(in) = Na(+)(out). It catalyses the reaction K(+)(in) = K(+)(out). With respect to regulation, activated by cAMP. cAMP binding causes a conformation change that leads to the assembly of an active tetramer and channel opening. Compared to other family members, cAMP has less stimulatory effect on HCN1 because part of the molecules already contain bound cAMP and form homotetramers when cAMP levels are low, this inherent tetramerization in HCN1 results in a weaker response to increased cAMP. In terms of biological role, hyperpolarization-activated ion channel that are permeable to sodium and potassium ions. Exhibits weak selectivity for potassium over sodium ions. Contributes to the native pacemaker currents in heart (If) and in neurons (Ih). Participates in cerebellar mechanisms of motor learning. May mediate responses to sour stimuli. This chain is Potassium/sodium hyperpolarization-activated cyclic nucleotide-gated channel 1 (Hcn1), found in Mus musculus (Mouse).